We begin with the raw amino-acid sequence, 291 residues long: 4,5:9,10-diseco-3-hydroxy-5,9,17-trioxoandrosta-1(10),2-diene-4-oate hydrolase (291 aa).

Residues 45–46, Asn54, Asn113, Leu115, and Arg192 contribute to the substrate site; that span reads GG. His269 acts as the Proton acceptor in catalysis. Substrate is bound at residue Trp270.

Belongs to the AB hydrolase superfamily. HsaD family. In terms of assembly, homodimer.

It carries out the reaction (1E,2Z)-3-hydroxy-5,9,17-trioxo-4,5:9,10-disecoandrosta-1(10),2-dien-4-oate + H2O = 3-[(3aS,4S,7aS)-7a-methyl-1,5-dioxo-octahydro-1H-inden-4-yl]propanoate + (2Z,4Z)-2-hydroxyhexa-2,4-dienoate + H(+). The catalysed reaction is 2,6-dioxo-6-phenylhexa-3-enoate + H2O = 2-oxopent-4-enoate + benzoate + H(+). It participates in lipid metabolism; steroid biosynthesis. Catalyzes the hydrolysis of a carbon-carbon bond in 4,5: 9,10-diseco-3-hydroxy-5,9,17-trioxoandrosta-1(10),2-diene-4-oate (4,9-DSHA) to yield 9,17-dioxo-1,2,3,4,10,19-hexanorandrostan-5-oate (DOHNAA) and 2-hydroxy-hexa-2,4-dienoate (HHD). Is also able to catalyze the hydrolysis of 2-hydroxy-6-oxo-6-phenylhexa-2,4-dienoic acid (HOPDA) and the synthetic analog 8-(2-chlorophenyl)-2-hydroxy-5-methyl-6-oxoocta-2,4-dienoic acid (HOPODA). The polypeptide is 4,5:9,10-diseco-3-hydroxy-5,9,17-trioxoandrosta-1(10),2-diene-4-oate hydrolase (hsaD) (Mycobacterium tuberculosis (strain ATCC 25618 / H37Rv)).